Consider the following 206-residue polypeptide: Cytochrome c oxidase assembly protein CtaG (206 aa).

Over 1–17 (MPEVQPSALPKPAPRLG) the chain is Cytoplasmic. A helical; Signal-anchor for type II membrane protein membrane pass occupies residues 18 to 40 (RDAAVASICGFVVALMVGASFAA). Topologically, residues 41 to 206 (VPFYDWFCRT…GEPDQRKGNL (166 aa)) are periplasmic.

Belongs to the COX11/CtaG family.

It is found in the cell inner membrane. In terms of biological role, exerts its effect at some terminal stage of cytochrome c oxidase synthesis, probably by being involved in the insertion of the copper B into subunit I. The sequence is that of Cytochrome c oxidase assembly protein CtaG from Rhodopseudomonas palustris (strain BisB5).